Consider the following 296-residue polypeptide: Aquaporin PIP1-6 (296 aa).

The next 2 membrane-spanning stretches (helical) occupy residues 63–83 and 98–120; these read IAEF…VMGV and IAWA…SGGH. The NPA 1 motif lies at 122 to 124; it reads NPA. The next 3 membrane-spanning stretches (helical) occupy residues 141–161, 183–203, and 217–237; these read VYYV…VKAF, GDGL…VFSA, and ALAP…TIPI. Positions 243-245 match the NPA 2 motif; sequence NPA. The helical transmembrane segment at 265-285 threads the bilayer; sequence IFWVGPFAGAALAAVYHQVVL.

The protein belongs to the MIP/aquaporin (TC 1.A.8) family. PIP (TC 1.A.8.11) subfamily.

It localises to the cell membrane. Aquaporins facilitate the transport of water and small neutral solutes across cell membranes. The protein is Aquaporin PIP1-6 (PIP1-6) of Zea mays (Maize).